A 209-amino-acid polypeptide reads, in one-letter code: Superoxide dismutase [Mn/Fe] (209 aa).

4 residues coordinate Fe(3+): His-38, His-90, Asp-172, and His-176. Residues His-38, His-90, Asp-172, and His-176 each coordinate Mn(2+).

Belongs to the iron/manganese superoxide dismutase family. Mn(2+) serves as cofactor. Fe(3+) is required as a cofactor.

It carries out the reaction 2 superoxide + 2 H(+) = H2O2 + O2. In terms of biological role, destroys superoxide anion radicals which are normally produced within the cells and which are toxic to biological systems. Catalyzes the dismutation of superoxide anion radicals into O2 and H2O2 by successive reduction and oxidation of the transition metal ion at the active site. The sequence is that of Superoxide dismutase [Mn/Fe] (sodB) from Rickettsia prowazekii (strain Madrid E).